Consider the following 130-residue polypeptide: Large ribosomal subunit protein bL17 (130 aa).

It belongs to the bacterial ribosomal protein bL17 family. Part of the 50S ribosomal subunit. Contacts protein L32.

The sequence is that of Large ribosomal subunit protein bL17 from Delftia acidovorans (strain DSM 14801 / SPH-1).